We begin with the raw amino-acid sequence, 179 residues long: Large ribosomal subunit protein uL5 (179 aa).

The protein belongs to the universal ribosomal protein uL5 family. As to quaternary structure, part of the 50S ribosomal subunit; part of the 5S rRNA/L5/L18/L25 subcomplex. Contacts the 5S rRNA and the P site tRNA. Forms a bridge to the 30S subunit in the 70S ribosome.

Functionally, this is one of the proteins that bind and probably mediate the attachment of the 5S RNA into the large ribosomal subunit, where it forms part of the central protuberance. In the 70S ribosome it contacts protein S13 of the 30S subunit (bridge B1b), connecting the 2 subunits; this bridge is implicated in subunit movement. Contacts the P site tRNA; the 5S rRNA and some of its associated proteins might help stabilize positioning of ribosome-bound tRNAs. This is Large ribosomal subunit protein uL5 from Lawsonia intracellularis (strain PHE/MN1-00).